The sequence spans 256 residues: Type III pantothenate kinase (256 aa).

6–13 (DIGNTHTV) serves as a coordination point for ATP. Residues Y100 and 107 to 110 (GADR) each bind substrate. The Proton acceptor role is filled by D109. D129 lines the K(+) pocket. ATP is bound at residue T132. T184 is a binding site for substrate.

It belongs to the type III pantothenate kinase family. Homodimer. It depends on NH4(+) as a cofactor. The cofactor is K(+).

The protein resides in the cytoplasm. The catalysed reaction is (R)-pantothenate + ATP = (R)-4'-phosphopantothenate + ADP + H(+). Its pathway is cofactor biosynthesis; coenzyme A biosynthesis; CoA from (R)-pantothenate: step 1/5. In terms of biological role, catalyzes the phosphorylation of pantothenate (Pan), the first step in CoA biosynthesis. The sequence is that of Type III pantothenate kinase from Acidothermus cellulolyticus (strain ATCC 43068 / DSM 8971 / 11B).